Here is a 411-residue protein sequence, read N- to C-terminus: MAKKKDEEYCSFCGMPRTQVNLMLEGVHAHICDECALRAGEVVREALQKFKSEETNNLKREDLPRPIEIKEFLDSYVIGQDDAKRFLSVAVYNHYKRLLQQEDSDGVEIEKSNIIMVGPTGTGKTLLARTIAKMLHVPFAVVDATVLTEAGYVGEDIESILTRLLQAADYDVKQAERGIVFIDEIDKIARKSDNPSITRDVSGEGVQQGLLKLLEGSIVNVPPQGGRKHPEQKMIPVDTRHILFVCAGAFDGIEKKIAQRLNTRVVGYTAGLQNRHIDRENMLRYIRPQDLKSFGLIPEIIGRLPILTHLEPLDRDALRNIMTEPKNAITKQYEKLFAMDGIKVSFTSDMLDFVVDKAIEFKLGARGLRSIVETIMMDAMFTMPSGKKKTLVVDKAYAEAHLNIDDLLQDQ.

Residues 1–51 enclose the ClpX-type ZB domain; the sequence is MAKKKDEEYCSFCGMPRTQVNLMLEGVHAHICDECALRAGEVVREALQKFK. Zn(2+) contacts are provided by Cys10, Cys13, Cys32, and Cys35. 119 to 126 serves as a coordination point for ATP; that stretch reads PTGTGKTL.

The protein belongs to the ClpX chaperone family. As to quaternary structure, component of the ClpX-ClpP complex. Forms a hexameric ring that, in the presence of ATP, binds to fourteen ClpP subunits assembled into a disk-like structure with a central cavity, resembling the structure of eukaryotic proteasomes.

Functionally, ATP-dependent specificity component of the Clp protease. It directs the protease to specific substrates. Can perform chaperone functions in the absence of ClpP. The polypeptide is ATP-dependent Clp protease ATP-binding subunit ClpX (Porphyromonas gingivalis (strain ATCC 33277 / DSM 20709 / CIP 103683 / JCM 12257 / NCTC 11834 / 2561)).